Reading from the N-terminus, the 202-residue chain is Molybdenum cofactor guanylyltransferase (202 aa).

GTP-binding positions include 9–11 (LAG), lysine 22, aspartate 70, and aspartate 96. Aspartate 96 serves as a coordination point for Mg(2+).

This sequence belongs to the MobA family. Monomer. It depends on Mg(2+) as a cofactor.

It localises to the cytoplasm. It carries out the reaction Mo-molybdopterin + GTP + H(+) = Mo-molybdopterin guanine dinucleotide + diphosphate. Functionally, transfers a GMP moiety from GTP to Mo-molybdopterin (Mo-MPT) cofactor (Moco or molybdenum cofactor) to form Mo-molybdopterin guanine dinucleotide (Mo-MGD) cofactor. The polypeptide is Molybdenum cofactor guanylyltransferase (Desulfosudis oleivorans (strain DSM 6200 / JCM 39069 / Hxd3) (Desulfococcus oleovorans)).